The primary structure comprises 433 residues: Glutamyl-tRNA reductase (433 aa).

Residues 49-52, Ser109, 114-116, and Gln120 contribute to the substrate site; these read TCNR and EGQ. Residue Cys50 is the Nucleophile of the active site. 189–194 lines the NADP(+) pocket; that stretch reads GAGKMS.

This sequence belongs to the glutamyl-tRNA reductase family. Homodimer.

The enzyme catalyses (S)-4-amino-5-oxopentanoate + tRNA(Glu) + NADP(+) = L-glutamyl-tRNA(Glu) + NADPH + H(+). It participates in porphyrin-containing compound metabolism; protoporphyrin-IX biosynthesis; 5-aminolevulinate from L-glutamyl-tRNA(Glu): step 1/2. The protein operates within porphyrin-containing compound metabolism; chlorophyll biosynthesis. Functionally, catalyzes the NADPH-dependent reduction of glutamyl-tRNA(Glu) to glutamate 1-semialdehyde (GSA). This Acaryochloris marina (strain MBIC 11017) protein is Glutamyl-tRNA reductase.